A 528-amino-acid chain; its full sequence is Putative pumilio homolog 10 (528 aa).

Residues 188 to 528 (EGSGASYPDE…KIFSKTILKK (341 aa)) enclose the PUM-HD domain. Pumilio repeat units follow at residues 213–248 (EIYG…VIFL), 249–284 (EIID…MIVS), 285–323 (VLTS…ALVK), 325–360 (ALEP…FVVE), 361–396 (AATE…RLVA), 397–433 (EISR…LPFR), 434–465 (THCI…EIVR), and 466–503 (ELLS…RLVE).

It localises to the cytoplasm. Its function is as follows. Sequence-specific RNA-binding protein that regulates translation and mRNA stability by binding the 3'-UTR of target mRNAs. The protein is Putative pumilio homolog 10 (APUM10) of Arabidopsis thaliana (Mouse-ear cress).